The chain runs to 636 residues: Biosynthetic arginine decarboxylase (636 aa).

The residue at position 110 (K110) is an N6-(pyridoxal phosphate)lysine. Substrate is bound at residue 290–300; sequence IDVGGGLGVDY.

Belongs to the Orn/Lys/Arg decarboxylase class-II family. SpeA subfamily. Mg(2+) is required as a cofactor. It depends on pyridoxal 5'-phosphate as a cofactor.

The catalysed reaction is L-arginine + H(+) = agmatine + CO2. Its function is as follows. Catalyzes the biosynthesis of agmatine from arginine. This chain is Biosynthetic arginine decarboxylase, found in Pseudomonas aeruginosa (strain ATCC 15692 / DSM 22644 / CIP 104116 / JCM 14847 / LMG 12228 / 1C / PRS 101 / PAO1).